Reading from the N-terminus, the 481-residue chain is UDP-glycosyltransferase 72E3 (481 aa).

The active-site Proton acceptor is His-18. His-18 lines the an anthocyanidin pocket. Asp-111 acts as the Charge relay in catalysis. Residues Ala-346, Gln-348, His-363, Trp-366, Ser-368, and Glu-371 each contribute to the UDP-alpha-D-glucose site. Ala-386 lines the an anthocyanidin pocket. UDP-alpha-D-glucose-binding residues include Glu-387 and Gln-388.

Belongs to the UDP-glycosyltransferase family. Expressed in seedlings and roots, and at lower levels in flowers and siliques.

The catalysed reaction is (E)-4-coumarate + UDP-alpha-D-glucose = 4-O-(beta-D-glucosyl)-trans-4-coumarate + UDP + H(+). The enzyme catalyses (E)-sinapyl alcohol + UDP-alpha-D-glucose = 4-O-(beta-D-glucosyl)-trans-4-sinapoyl alcohol + UDP + H(+). It carries out the reaction (E)-coniferol + UDP-alpha-D-glucose = 4-O-(beta-D-glucosyl)-(E)-coniferol + UDP + H(+). It catalyses the reaction (E)-sinapate + UDP-alpha-D-glucose = 4-O-(beta-D-glucosyl)-trans-sinapate + UDP + H(+). The catalysed reaction is (E)-coniferaldehyde + UDP-alpha-D-glucose = 4-O-(beta-D-glucosyl)-4-(E)-coniferyl aldehyde + UDP + H(+). The enzyme catalyses (E)-sinapaldehyde + UDP-alpha-D-glucose = 4-O-(beta-D-glucosyl)-4-trans-sinapoyl aldehyde + UDP + H(+). Involved in the O-glucosylation of monolignols (alcohol monomers of lignin). Glucosylates coniferyl alcohol to form coniferyl alcohol 4-O-glucoside. Glucosylates sinapyl alcohol to form sinapyl alcohol 4-O-glucoside. Possesses low activity with sinapate as substrate. In Arabidopsis thaliana (Mouse-ear cress), this protein is UDP-glycosyltransferase 72E3.